The sequence spans 461 residues: GTPase Era, mitochondrial (461 aa).

The N-terminal 35 residues, 1–35, are a transit peptide targeting the mitochondrion; that stretch reads MAAPWLQRWRGAYAGPSGPLRLVRLHGVQRSSWRA. Residues 39-73 are disordered; sequence AAGAFGAGPHPGPPQRAANPGPGPHPPPVATSREK. The 266-residue stretch at 89–354 folds into the Era-type G domain; the sequence is KVLRISIIGA…QYLLMQAKPG (266 aa). A G1 region spans residues 97–104; sequence GAPNSGKS. 97–104 serves as a coordination point for GTP; it reads GAPNSGKS. A G2 region spans residues 123-127; sequence HTTRC. Residues 144 to 147 are G3; that stretch reads DTPG. Residues 144 to 148 and 213 to 216 each bind GTP; these read DTPGL and NKVD. A G4 region spans residues 213–216; sequence NKVD. A disordered region spans residues 260–319; the sequence is KVTQTPPPENRARESPCQLETDKAQEGSSLDNSSDVKASESSLDTEAREQKPYKYGDQKN. The span at 269 to 284 shows a compositional bias: basic and acidic residues; sequence NRARESPCQLETDKAQ. A compositionally biased stretch (polar residues) spans 285–303; it reads EGSSLDNSSDVKASESSLD. Residues 304–319 are compositionally biased toward basic and acidic residues; that stretch reads TEAREQKPYKYGDQKN. The interval 332–334 is G5; sequence LAA. A KH type-2 domain is found at 380-461; sequence ILEYLPLEVP…RLKLKVEVKS (82 aa).

It belongs to the TRAFAC class TrmE-Era-EngA-EngB-Septin-like GTPase superfamily. Era GTPase family.

It localises to the mitochondrion matrix. The protein localises to the mitochondrion inner membrane. Its function is as follows. Probable GTPase that plays a role in the mitochondrial ribosomal small subunit assembly. Specifically binds the 12S mitochondrial rRNA (12S mt-rRNA) to a 33 nucleotide section delineating the 3' terminal stem-loop region. May act as a chaperone that protects the 12S mt-rRNA on the 28S mitoribosomal subunit during ribosomal small subunit assembly. This chain is GTPase Era, mitochondrial (ERAL1), found in Gallus gallus (Chicken).